Here is a 274-residue protein sequence, read N- to C-terminus: NH(3)-dependent NAD(+) synthetase (274 aa).

46–53 provides a ligand contact to ATP; that stretch reads GISGGQDS. Asp52 contacts Mg(2+). Deamido-NAD(+) is bound at residue Arg140. Residue Thr160 coordinates ATP. Glu165 provides a ligand contact to Mg(2+). Deamido-NAD(+)-binding residues include Lys173 and Asp180. Lys189 and Thr211 together coordinate ATP. 260 to 261 serves as a coordination point for deamido-NAD(+); it reads HK.

It belongs to the NAD synthetase family. In terms of assembly, homodimer.

It catalyses the reaction deamido-NAD(+) + NH4(+) + ATP = AMP + diphosphate + NAD(+) + H(+). Its pathway is cofactor biosynthesis; NAD(+) biosynthesis; NAD(+) from deamido-NAD(+) (ammonia route): step 1/1. Functionally, catalyzes the ATP-dependent amidation of deamido-NAD to form NAD. Uses ammonia as a nitrogen source. The chain is NH(3)-dependent NAD(+) synthetase from Streptococcus suis (strain 05ZYH33).